The following is a 453-amino-acid chain: UDP-N-acetylmuramoylalanine--D-glutamate ligase (453 aa).

An ATP-binding site is contributed by 120 to 126 (GSNGKST).

The protein belongs to the MurCDEF family.

It is found in the cytoplasm. The catalysed reaction is UDP-N-acetyl-alpha-D-muramoyl-L-alanine + D-glutamate + ATP = UDP-N-acetyl-alpha-D-muramoyl-L-alanyl-D-glutamate + ADP + phosphate + H(+). The protein operates within cell wall biogenesis; peptidoglycan biosynthesis. Cell wall formation. Catalyzes the addition of glutamate to the nucleotide precursor UDP-N-acetylmuramoyl-L-alanine (UMA). In Teredinibacter turnerae (strain ATCC 39867 / T7901), this protein is UDP-N-acetylmuramoylalanine--D-glutamate ligase.